Reading from the N-terminus, the 200-residue chain is Imidazoleglycerol-phosphate dehydratase (200 aa).

The protein belongs to the imidazoleglycerol-phosphate dehydratase family.

The protein resides in the cytoplasm. The catalysed reaction is D-erythro-1-(imidazol-4-yl)glycerol 3-phosphate = 3-(imidazol-4-yl)-2-oxopropyl phosphate + H2O. It functions in the pathway amino-acid biosynthesis; L-histidine biosynthesis; L-histidine from 5-phospho-alpha-D-ribose 1-diphosphate: step 6/9. This is Imidazoleglycerol-phosphate dehydratase from Prosthecochloris aestuarii (strain DSM 271 / SK 413).